Here is a 272-residue protein sequence, read N- to C-terminus: MNRIDKTLEKLKANRKKMLSPYITAGDPYPELTVSLMHQLVKSGADVLELGIPFSDPMAEGPVIQRAMERALAHSIHCDDVLNMVRQFRKTDTETPVILMGYLNPIEQYGYDLFAQQAVEAGVDGTILVDLPPEEADGVSRVWQKHGLYSIYLCSPTTSAERMNYINQHANGYLYYVSLKGVTGSDALKLPELKAQYLQRKAQSKLPLMVGFGIKTPEMAAQVAEFADGVIVGAALINEIIEAYEAKKDPLQASGALLSSMRQAIDNIGSMV.

Residues glutamate 49 and glutamate 60 each act as proton acceptor in the active site.

Belongs to the TrpA family. As to quaternary structure, tetramer of two alpha and two beta chains.

It carries out the reaction (1S,2R)-1-C-(indol-3-yl)glycerol 3-phosphate + L-serine = D-glyceraldehyde 3-phosphate + L-tryptophan + H2O. The protein operates within amino-acid biosynthesis; L-tryptophan biosynthesis; L-tryptophan from chorismate: step 5/5. In terms of biological role, the alpha subunit is responsible for the aldol cleavage of indoleglycerol phosphate to indole and glyceraldehyde 3-phosphate. In Legionella pneumophila subsp. pneumophila (strain Philadelphia 1 / ATCC 33152 / DSM 7513), this protein is Tryptophan synthase alpha chain.